A 90-amino-acid chain; its full sequence is RNA-binding protein Hfq (90 aa).

The 61-residue stretch at D10–L70 folds into the Sm domain.

Belongs to the Hfq family. Homohexamer.

Functionally, RNA chaperone that binds small regulatory RNA (sRNAs) and mRNAs to facilitate mRNA translational regulation in response to envelope stress, environmental stress and changes in metabolite concentrations. Also binds with high specificity to tRNAs. The polypeptide is RNA-binding protein Hfq (Symbiobacterium thermophilum (strain DSM 24528 / JCM 14929 / IAM 14863 / T)).